Here is a 523-residue protein sequence, read N- to C-terminus: Light-independent protochlorophyllide reductase subunit B (523 aa).

D36 contributes to the [4Fe-4S] cluster binding site. D290 (proton donor) is an active-site residue. 425 to 426 provides a ligand contact to substrate; that stretch reads GL.

Belongs to the ChlB/BchB/BchZ family. In terms of assembly, protochlorophyllide reductase is composed of three subunits; ChlL, ChlN and ChlB. Forms a heterotetramer of two ChlB and two ChlN subunits. [4Fe-4S] cluster serves as cofactor.

It carries out the reaction chlorophyllide a + oxidized 2[4Fe-4S]-[ferredoxin] + 2 ADP + 2 phosphate = protochlorophyllide a + reduced 2[4Fe-4S]-[ferredoxin] + 2 ATP + 2 H2O. It participates in porphyrin-containing compound metabolism; chlorophyll biosynthesis (light-independent). In terms of biological role, component of the dark-operative protochlorophyllide reductase (DPOR) that uses Mg-ATP and reduced ferredoxin to reduce ring D of protochlorophyllide (Pchlide) to form chlorophyllide a (Chlide). This reaction is light-independent. The NB-protein (ChlN-ChlB) is the catalytic component of the complex. The sequence is that of Light-independent protochlorophyllide reductase subunit B from Prochlorococcus marinus (strain MIT 9215).